The primary structure comprises 99 residues: Sm-like protein LSM7 (99 aa).

One can recognise a Sm domain in the interval 6–86; sequence ETVLDLAKFV…VMLVSPTDGT (81 aa).

It belongs to the snRNP Sm proteins family. As to quaternary structure, component of the heptameric LSM1-LSM7 complex that forms a seven-membered ring structure with a donut shape. The LSM subunits are arranged in the order LSM1, LSM2, LSM3, LSM6, LSM5, LSM7 and LSM4. Component of the heptameric LSM2-LSM8 complex that forms a seven-membered ring structure with a donut shape. The LSM subunits are arranged in the order LSM8, LSM2, LSM3, LSM6, LSM5, LSM7 and LSM4. LSM7 subunit interacts only with its two neighboring subunits, LSM5 and LSM4. In terms of tissue distribution, expressed in roots, leaves, stems, flowers and siliques.

The protein localises to the cytoplasm. Its subcellular location is the nucleus. Its function is as follows. Component of LSM protein complexes, which are involved in RNA processing. Component of the cytoplasmic LSM1-LSM7 complex which is involved in mRNA degradation by promoting decapping and leading to accurate 5'-3' mRNA decay. The cytoplasmic LSM1-LSM7 complex regulates developmental gene expression by the decapping of specific development-related transcripts. Component of the nuclear LSM2-LSM8 complex which is involved splicing nuclear mRNAs. LSM2-LSM8 binds directly to the U6 small nuclear RNAs (snRNAs) and is essential for accurate splicing of selected development-related mRNAs through the stabilization of the spliceosomal U6 snRNA. Plays a critical role in the regulation of development-related gene expression. This chain is Sm-like protein LSM7, found in Arabidopsis thaliana (Mouse-ear cress).